We begin with the raw amino-acid sequence, 58 residues long: MSEVKIGKNESLDSALRRFKRQLQRAGVLAEIRKREHYEKPSVKRKKKSEAARRRKYR.

Residues 36-58 (EHYEKPSVKRKKKSEAARRRKYR) form a disordered region. Residues 43–58 (VKRKKKSEAARRRKYR) are compositionally biased toward basic residues.

The protein belongs to the bacterial ribosomal protein bS21 family.

The sequence is that of Small ribosomal subunit protein bS21 from Symbiobacterium thermophilum (strain DSM 24528 / JCM 14929 / IAM 14863 / T).